A 192-amino-acid chain; its full sequence is Xanthine phosphoribosyltransferase (192 aa).

The xanthine site is built by Leu-20 and Asn-27. A 5-phospho-alpha-D-ribose 1-diphosphate-binding site is contributed by 128 to 132 (ANGDA). Residue Lys-156 participates in xanthine binding.

It belongs to the purine/pyrimidine phosphoribosyltransferase family. Xpt subfamily. In terms of assembly, homodimer.

It is found in the cytoplasm. It carries out the reaction XMP + diphosphate = xanthine + 5-phospho-alpha-D-ribose 1-diphosphate. It functions in the pathway purine metabolism; XMP biosynthesis via salvage pathway; XMP from xanthine: step 1/1. Its function is as follows. Converts the preformed base xanthine, a product of nucleic acid breakdown, to xanthosine 5'-monophosphate (XMP), so it can be reused for RNA or DNA synthesis. This Staphylococcus carnosus (strain TM300) protein is Xanthine phosphoribosyltransferase.